The chain runs to 422 residues: Histidine--tRNA ligase (422 aa).

It belongs to the class-II aminoacyl-tRNA synthetase family. In terms of assembly, homodimer.

Its subcellular location is the cytoplasm. The catalysed reaction is tRNA(His) + L-histidine + ATP = L-histidyl-tRNA(His) + AMP + diphosphate + H(+). The chain is Histidine--tRNA ligase from Lysinibacillus sphaericus (strain C3-41).